Here is a 611-residue protein sequence, read N- to C-terminus: Growth hormone receptor (611 aa).

The N-terminal stretch at Met-1–Ser-20 is a signal peptide. Asn-16 is a glycosylation site (N-linked (GlcNAc...) asparagine). The Extracellular segment spans residues Ala-21–Glu-240. A disulfide bond links Cys-34 and Cys-44. An N-linked (GlcNAc...) asparagine glycan is attached at Asn-53. Residues Cys-75 and Cys-86 are joined by a disulfide bond. N-linked (GlcNAc...) asparagine glycosylation occurs at Asn-89. A disulfide bond links Cys-100 and Cys-114. The 104-residue stretch at Pro-125 to Ala-228 folds into the Fibronectin type-III domain. N-linked (GlcNAc...) asparagine glycans are attached at residues Asn-130, Asn-135, and Asn-174. The WSXWS motif signature appears at Phe-214–Ser-218. A helical transmembrane segment spans residues Phe-241–Ser-264. The Cytoplasmic segment spans residues Lys-265 to Pro-611. The interval Lys-270–Ala-355 is required for JAK2 binding. Positions Ile-273–Lys-281 match the Box 1 motif motif. The short motif at Asp-316–Asp-325 is the UbE motif element. Positions Ser-411 to Asn-455 are disordered. Residues Ser-414–Gln-433 are compositionally biased toward polar residues.

This sequence belongs to the type I cytokine receptor family. Type 1 subfamily. In terms of processing, the soluble form (GHBP) is produced by phorbol ester-promoted proteolytic cleavage at the cell surface (shedding) by ADAM17/TACE.

Its subcellular location is the cell membrane. The protein localises to the secreted. Receptor for pituitary gland growth hormone (GH1) involved in regulating postnatal body growth. On ligand binding, couples to the JAK2/STAT5 pathway. Its function is as follows. The soluble form (GHBP) acts as a reservoir of growth hormone in plasma and may be a modulator/inhibitor of GH signaling. The protein is Growth hormone receptor (GHR) of Columba livia (Rock dove).